The sequence spans 199 residues: Interleukin-11 (199 aa).

Positions 1-21 (MNCVCRLVLVVLSLWPDTAVA) are cleaved as a signal peptide. The tract at residues 182–190 (HLTLDWAVR) is important for interaction with IL11RA and for the stimulation of cell proliferation.

The protein belongs to the IL-6 superfamily. In terms of assembly, interacts with IL11RA to associate with IL6ST, giving rise to a multimeric signaling complex.

It is found in the secreted. Cytokine that stimulates the proliferation of hematopoietic stem cells and megakaryocyte progenitor cells and induces megakaryocyte maturation resulting in increased platelet production. Also promotes the proliferation of hepatocytes in response to liver damage. Binding to its receptor formed by IL6ST and IL11RA activates a signaling cascade that promotes cell proliferation. Signaling leads to the activation of intracellular protein kinases and the phosphorylation of STAT3. The interaction with the membrane-bound IL11RA and IL6ST stimulates 'classic signaling', whereas the binding of IL11 and soluble IL11RA to IL6ST stimulates 'trans-signaling'. In Homo sapiens (Human), this protein is Interleukin-11.